The primary structure comprises 122 residues: Large ribosomal subunit protein uL14 (122 aa).

The protein belongs to the universal ribosomal protein uL14 family. As to quaternary structure, part of the 50S ribosomal subunit. Forms a cluster with proteins L3 and L19. In the 70S ribosome, L14 and L19 interact and together make contacts with the 16S rRNA in bridges B5 and B8.

Binds to 23S rRNA. Forms part of two intersubunit bridges in the 70S ribosome. In Buchnera aphidicola subsp. Schizaphis graminum (strain Sg), this protein is Large ribosomal subunit protein uL14.